A 416-amino-acid polypeptide reads, in one-letter code: CC-adding tRNA nucleotidyltransferase (416 aa).

31 to 34 is a CTP binding site; the sequence is GAVR. Positions 46 and 48 each coordinate Mg(2+). Residues 106–107, asparagine 111, 148–157, and arginine 188 each bind CTP; these read RD and DPLRLLRAYR.

This sequence belongs to the tRNA nucleotidyltransferase/poly(A) polymerase family. Mg(2+) is required as a cofactor.

It catalyses the reaction a tRNA precursor + 2 CTP = a tRNA with a 3' CC end + 2 diphosphate. Its function is as follows. tRNA nucleotidyltransferase involved in the synthesis of the tRNA CCA terminus. Adds the two cytidine residues to tRNA. The chain is CC-adding tRNA nucleotidyltransferase from Synechocystis sp. (strain ATCC 27184 / PCC 6803 / Kazusa).